A 311-amino-acid polypeptide reads, in one-letter code: MPKVRTKDIIEQFQLELVSGAEGIYRPITTSDLSRPGIEMAGYFAYYPAERLQLLGRTELSFYETLTPEEKKSRMERLCTDITPGIIVSRGLEVPPELIEASERQSVPVMRSTMKTTRLSSRLTNYLESKLAPTTAVHGVLVDVYGVGVLITGKSGVGKSETALELVKRGHRLVADDCVEIRQEDEDTLVGSAPELIEHLLEIRGLGIINMMTLFGAGAVRTHKRISLVVDLELWDPEKQYDRLGLEEEKVKILDTELPKLTIPVRPGRNLAVIVEVAAMNFRLKRLGVNAAEEFSARLSDAIEDGAHDYD.

Catalysis depends on residues His-138 and Lys-159. Position 153-160 (153-160 (GKSGVGKS)) interacts with ATP. Ser-160 serves as a coordination point for Mg(2+). Residue Asp-177 is the Proton acceptor; for phosphorylation activity. Proton donor; for dephosphorylation activity of the active site. The important for the catalytic mechanism of both phosphorylation and dephosphorylation stretch occupies residues 201-210 (LEIRGLGIIN). A Mg(2+)-binding site is contributed by Glu-202. Arg-243 is a catalytic residue. An important for the catalytic mechanism of dephosphorylation region spans residues 264–269 (PVRPGR).

This sequence belongs to the HPrK/P family. As to quaternary structure, homohexamer. The cofactor is Mg(2+).

It carries out the reaction [HPr protein]-L-serine + ATP = [HPr protein]-O-phospho-L-serine + ADP + H(+). The enzyme catalyses [HPr protein]-O-phospho-L-serine + phosphate + H(+) = [HPr protein]-L-serine + diphosphate. Functionally, catalyzes the ATP- as well as the pyrophosphate-dependent phosphorylation of a specific serine residue in HPr, a phosphocarrier protein of the phosphoenolpyruvate-dependent sugar phosphotransferase system (PTS). HprK/P also catalyzes the pyrophosphate-producing, inorganic phosphate-dependent dephosphorylation (phosphorolysis) of seryl-phosphorylated HPr (P-Ser-HPr). The two antagonistic activities of HprK/P are regulated by several intracellular metabolites, which change their concentration in response to the absence or presence of rapidly metabolisable carbon sources (glucose, fructose, etc.) in the growth medium. Also phosphorylates/dephosphorylates the HPr-like catabolite repression protein crh on a specific serine residue. Therefore, by controlling the phosphorylation state of HPr and crh, HPrK/P is a sensor enzyme that plays a major role in the regulation of carbon metabolism and sugar transport: it mediates carbon catabolite repression (CCR), and regulates PTS-catalyzed carbohydrate uptake and inducer exclusion. The protein is HPr kinase/phosphorylase of Geobacillus kaustophilus (strain HTA426).